We begin with the raw amino-acid sequence, 485 residues long: Sulfate adenylyltransferase subunit 1 (485 aa).

Residues 17 to 232 (KDLLRLLTAG…LETVHIDNDH (216 aa)) enclose the tr-type G domain. Residues 26-33 (GSVDDGKS) form a G1 region. 26-33 (GSVDDGKS) contacts GTP. The G2 stretch occupies residues 84–88 (GITID). A G3 region spans residues 105-108 (DTPG). GTP-binding positions include 105-109 (DTPGH) and 160-163 (NKMD). Positions 160–163 (NKMD) are G4. Residues 197 to 199 (SAL) form a G5 region.

The protein belongs to the TRAFAC class translation factor GTPase superfamily. Classic translation factor GTPase family. CysN/NodQ subfamily. Heterodimer composed of CysD, the smaller subunit, and CysN.

The enzyme catalyses sulfate + ATP + H(+) = adenosine 5'-phosphosulfate + diphosphate. It functions in the pathway sulfur metabolism; hydrogen sulfide biosynthesis; sulfite from sulfate: step 1/3. Functionally, with CysD forms the ATP sulfurylase (ATPS) that catalyzes the adenylation of sulfate producing adenosine 5'-phosphosulfate (APS) and diphosphate, the first enzymatic step in sulfur assimilation pathway. APS synthesis involves the formation of a high-energy phosphoric-sulfuric acid anhydride bond driven by GTP hydrolysis by CysN coupled to ATP hydrolysis by CysD. The sequence is that of Sulfate adenylyltransferase subunit 1 from Bacteroides thetaiotaomicron (strain ATCC 29148 / DSM 2079 / JCM 5827 / CCUG 10774 / NCTC 10582 / VPI-5482 / E50).